Consider the following 234-residue polypeptide: MKKVMELVDVWKIYDLGEVKVEALRGVSFEVFEGEYVIIIGPSGSGKSTLLHILGCLDRPTKGKVLIEGEEVSRMGDRRLAQVRNRKIGFVFQSYNLLPRLTALENVELPMIYAGVPAKERKRRAKELLELVGLGDRLHHRPNQLSGGQQQRVAIARALANDPVFILADEPTGNLDTKTGEEILELFRKLHEMGKTLVVVTHNLEMVDEGTCIVRIRDGRIEGIERRGVVYGDT.

Residues 5–234 (MELVDVWKIY…ERRGVVYGDT (230 aa)) form the ABC transporter domain. Residue 41-48 (GPSGSGKS) coordinates ATP.

This sequence belongs to the ABC transporter superfamily.

This is an uncharacterized protein from Thermotoga maritima (strain ATCC 43589 / DSM 3109 / JCM 10099 / NBRC 100826 / MSB8).